We begin with the raw amino-acid sequence, 391 residues long: Probable sugar efflux transporter (391 aa).

Transmembrane regions (helical) follow at residues V16–L36, V51–L71, L82–F102, W103–T123, Q138–G158, T170–P190, P210–Y230, V247–G267, F277–H297, W300–L320, I338–I358, and L361–F381.

It belongs to the major facilitator superfamily. SotB (TC 2.A.1.2) family.

It is found in the cell inner membrane. In terms of biological role, involved in the efflux of sugars. The physiological role may be the reduction of the intracellular concentration of toxic sugars or sugar metabolites. The protein is Probable sugar efflux transporter of Helicobacter acinonychis (strain Sheeba).